A 602-amino-acid polypeptide reads, in one-letter code: MLHFTAATSRFRLGRERANSVRSDGGWGVLQPVSATFNPPLRGWQRRALVQYLGTQPRDFLAVATPGSGKTSFALRIAAELLRYHTVEQVTVVVPTEHLKVQWAHAAAAHGLSLDPKFANSNPQTSPEYHGVMVTYAQVASHPTLHRVRTEARKTLVVFDEIHHGGDAKTWGDAIREAFGDATRRLALTGTPFRSDDSPIPFVSYQPDADGVLRSQADHTYGYAEALADGVVRPVVFLAYSGQARWRDSAGEEYEARLGEPLSAEQTARAWRTALDPEGEWMPAVITAADRRLRQLRAHVPDAGGMIIASDRTTARAYARLLTTMTAEEPTVVLSDDPGSSARITEFAQGTSRWLVAVRMVSEGVDVPRLSVGVYATNASTPLFFAQAIGRFVRSRRPGETASIFVPSVPNLLQLASALEVQRNHVLGRPHRESAHDPLDGDPATRTQTERGGAERGFTALGADAELDQVIFDGSSFGTATPTGSDEEADYLGIPGLLDAEQMRALLHRRQDEQLRKRAQLQKGATQPATSGASASVHGQLRDLRRELHTLVSIAHHRTGKPHGWIHDERRRRCGGPPIAAATRAQIKARIDALRQLNSERS.

The region spanning 51–210 (QYLGTQPRDF…PFVSYQPDAD (160 aa)) is the Helicase ATP-binding domain. Positions 430 to 439 (PHRESAHDPL) are enriched in basic and acidic residues. Disordered regions lie at residues 430-452 (PHRE…TERG) and 518-538 (RAQL…ASVH). A compositionally biased stretch (polar residues) spans 523–534 (KGATQPATSGAS).

It to M.leprae ML1624.

This is an uncharacterized protein from Mycobacterium tuberculosis (strain ATCC 25618 / H37Rv).